The following is a 939-amino-acid chain: MPAVSKGDGMRGLAVFISDIRNCKSKEAEIKRINKELANIRSKFKGDKALDGYSKKKYVCKLLFIFLLGHDIDFGHMEAVNLLSSNRYTEKQIGYLFISVLVNSNSELIRLINNAIKNDLASRNPTFMGLALHCIASVGSREMAEAFAGEIPKVLVAGDTMDSVKQSAALCLLRLYRTSPDLVPMGDWTSRVVHLLNDQHLGVVTAATSLITTLAQKNPEEFKTSVSLAVSRLSRIVTSASTDLQDYTYYFVPAPWLSVKLLRLLQCYPPPDPAVRGRLTECLETILNKAQEPPKSKKVQHSNAKNAVLFEAISLIIHHDSEPNLLVRACNQLGQFLQHRETNLRYLALESMCTLASSEFSHEAVKTHIETVINALKTERDVSVRQRAVDLLYAMCDRSNAPQIVAEMLSYLETADYSIREEIVLKVAILAEKYAVDYTWYVDTILNLIRIAGDYVSEEVWYRVIQIVINRDDVQGYAAKTVFEALQAPACHENLVKVGGYILGEFGNLIAGDPRSSPLIQFHLLHSKFHLCSVPTRALLLSTYIKFVNLFPEVKPTIQDVLRSDSQLRNADVELQQRAVEYLRLSTVASTDILATVLEEMPPFPERESSILAKLKKKKGPSTVTDLEDTKRDRSVDVNGGPEPAPASTSAVSTPSPSADLLGLGAAPPAPAGPPPSSGGSGLLVDVFSDSASVVAPLAPGSEDNFARFVCKNNGVLFENQLLQIGLKSEFRQNLGRMFIFYGNKTSTQFLNFTPTLICSDDLQPNLNLQTKPVDPTVEGGAQVQQVVNIECVSDFTEAPVLNIQFRYGGTFQNVSVQLPITLNKFFQPTEMASQDFFQRWKQLSNPQQEVQNIFKAKHPMDTEVTKAKIIGFGSALLEEVDPNPANFVGAGIIHTKTTQIGCLLRLEPNLQAQMYRLTLRTSKEAVSQRLCELLSAQF.

A 1,2-diacyl-sn-glycero-3-phospho-(1D-myo-inositol-3,4,5-trisphosphate) is bound by residues 11–12, Lys43, Tyr53, and 57–61; these read RG and KYVCK. Positions 612–681 are disordered; the sequence is LAKLKKKKGP…AGPPPSSGGS (70 aa). Low complexity predominate over residues 646 to 667; that stretch reads PASTSAVSTPSPSADLLGLGAA. Residues 668–677 are compositionally biased toward pro residues; that stretch reads PPAPAGPPPS.

Belongs to the adaptor complexes large subunit family. In terms of assembly, adaptor protein complex 2 (AP-2) is a heterotetramer composed of two large adaptins (alpha-type subunit AP2A1 or AP2A2 and beta-type subunit AP2B1), a medium adaptin (mu-type subunit AP2M1) and a small adaptin (sigma-type subunit AP2S1). Binds EPN1, EPS15, AMPH, SNAP91 and BIN1. Interacts with HIP1. Interacts with DGKD. Interacts with DENND1A, DENND1B and DENND1C. Interacts with FCHO1 and DAB2. Interacts with ATAT1; this interaction is required for efficient alpha-tubulin acetylation by ATAT1. Interacts with KIAA1107. Together with AP2B1 and AP2M1, it interacts with ADAM10; this interaction facilitates ADAM10 endocytosis from the plasma membrane during long-term potentiation in hippocampal neurons. Interacts with CLN3 (via dileucine motif). Interacts with ABCB11; this interaction regulates cell membrane expression of ABCB11 through its internalization in a clathrin-dependent manner and its subsequent degradation. Interacts with Cacfd1. Interacts with DNAJC6. In terms of tissue distribution, expressed in the brain (at protein level).

The protein resides in the cell membrane. The protein localises to the membrane. It localises to the coated pit. Functionally, component of the adaptor protein complex 2 (AP-2). Adaptor protein complexes function in protein transport via transport vesicles in different membrane traffic pathways. Adaptor protein complexes are vesicle coat components and appear to be involved in cargo selection and vesicle formation. AP-2 is involved in clathrin-dependent endocytosis in which cargo proteins are incorporated into vesicles surrounded by clathrin (clathrin-coated vesicles, CCVs) which are destined for fusion with the early endosome. The clathrin lattice serves as a mechanical scaffold but is itself unable to bind directly to membrane components. Clathrin-associated adaptor protein (AP) complexes which can bind directly to both the clathrin lattice and to the lipid and protein components of membranes are considered to be the major clathrin adaptors contributing the CCV formation. AP-2 also serves as a cargo receptor to selectively sort the membrane proteins involved in receptor-mediated endocytosis. AP-2 seems to play a role in the recycling of synaptic vesicle membranes from the presynaptic surface. AP-2 recognizes Y-X-X-[FILMV] (Y-X-X-Phi) and [ED]-X-X-X-L-[LI] endocytosis signal motifs within the cytosolic tails of transmembrane cargo molecules. AP-2 may also play a role in maintaining normal post-endocytic trafficking through the ARF6-regulated, non-clathrin pathway. During long-term potentiation in hippocampal neurons, AP-2 is responsible for the endocytosis of ADAM10. The AP-2 alpha subunit binds polyphosphoinositide-containing lipids, positioning AP-2 on the membrane. The AP-2 alpha subunit acts via its C-terminal appendage domain as a scaffolding platform for endocytic accessory proteins. The AP-2 alpha and AP-2 sigma subunits are thought to contribute to the recognition of the [ED]-X-X-X-L-[LI] motif. The sequence is that of AP-2 complex subunit alpha-2 (AP2A2) from Homo sapiens (Human).